We begin with the raw amino-acid sequence, 50 residues long: uncharacterized protein (50 aa).

This is an uncharacterized protein from Dictyostelium discoideum (Social amoeba).